The primary structure comprises 325 residues: Large ribosomal subunit protein uL18 (325 aa).

The disordered stretch occupies residues 247–300 (IRIPPSRRNPRRRSPRSGGRWPSCRSPPARRRSRSTRPTSWPRSRPTSKPKRPR). Low complexity-rich tracts occupy residues 262–273 (RSGGRWPSCRSP) and 282–291 (TRPTSWPRSR).

Belongs to the universal ribosomal protein uL18 family. As to quaternary structure, component of the large ribosomal subunit (LSU).

It localises to the cytoplasm. It is found in the nucleus. Its function is as follows. Component of the ribosome, a large ribonucleoprotein complex responsible for the synthesis of proteins in the cell. The small ribosomal subunit (SSU) binds messenger RNAs (mRNAs) and translates the encoded message by selecting cognate aminoacyl-transfer RNA (tRNA) molecules. The large subunit (LSU) contains the ribosomal catalytic site termed the peptidyl transferase center (PTC), which catalyzes the formation of peptide bonds, thereby polymerizing the amino acids delivered by tRNAs into a polypeptide chain. The nascent polypeptides leave the ribosome through a tunnel in the LSU and interact with protein factors that function in enzymatic processing, targeting, and the membrane insertion of nascent chains at the exit of the ribosomal tunnel. This Anopheles gambiae (African malaria mosquito) protein is Large ribosomal subunit protein uL18 (RpL5).